A 539-amino-acid polypeptide reads, in one-letter code: Dihydrolipoyllysine-residue acetyltransferase component 2 of pyruvate dehydrogenase complex, mitochondrial (539 aa).

A mitochondrion-targeting transit peptide spans 1 to 102; sequence MASRIINHSK…SSQMRSVRGF (102 aa). Residues 102-122 form a disordered region; that stretch reads FSSSSDLPPHQEIGMPSLSPT. In terms of domain architecture, Lipoyl-binding spans 111–187; the sequence is HQEIGMPSLS…QVGEVIAITV (77 aa). Lys-152 carries the post-translational modification N6-lipoyllysine. The disordered stretch occupies residues 196 to 244; it reads FKDYTPSSDTGPAAPEAKPAPSLPKEEKVEKPASAPEAKISKPSSAPSE. The Peripheral subunit-binding (PSBD) domain occupies 248-285; that stretch reads FASPLARKLAEDNNVPLSSIKGTGPEGRIVKADVEDFL. Residues His-512 and Asp-516 contribute to the active site.

Belongs to the 2-oxoacid dehydrogenase family. Requires (R)-lipoate as cofactor.

The protein resides in the mitochondrion matrix. The catalysed reaction is N(6)-[(R)-dihydrolipoyl]-L-lysyl-[protein] + acetyl-CoA = N(6)-[(R)-S(8)-acetyldihydrolipoyl]-L-lysyl-[protein] + CoA. Its function is as follows. The pyruvate dehydrogenase complex catalyzes the overall conversion of pyruvate to acetyl-CoA and CO(2). It contains multiple copies of three enzymatic components: pyruvate dehydrogenase (E1), dihydrolipoamide acetyltransferase (E2) and lipoamide dehydrogenase (E3). This is Dihydrolipoyllysine-residue acetyltransferase component 2 of pyruvate dehydrogenase complex, mitochondrial from Arabidopsis thaliana (Mouse-ear cress).